The following is a 70-amino-acid chain: Large ribosomal subunit protein eL38 (70 aa).

The protein belongs to the eukaryotic ribosomal protein eL38 family.

The chain is Large ribosomal subunit protein eL38 (RpL38) from Drosophila melanogaster (Fruit fly).